A 142-amino-acid chain; its full sequence is Fluoride-specific ion channel FluC 1 (142 aa).

Helical transmembrane passes span A17 to L37, G42 to A62, F80 to F100, and Y109 to G129. Na(+)-binding residues include G87 and T90.

Belongs to the fluoride channel Fluc/FEX (TC 1.A.43) family.

The protein resides in the cell inner membrane. The enzyme catalyses fluoride(in) = fluoride(out). Na(+) is not transported, but it plays an essential structural role and its presence is essential for fluoride channel function. Fluoride-specific ion channel. Important for reducing fluoride concentration in the cell, thus reducing its toxicity. The sequence is that of Fluoride-specific ion channel FluC 1 from Bradyrhizobium diazoefficiens (strain JCM 10833 / BCRC 13528 / IAM 13628 / NBRC 14792 / USDA 110).